Here is a 502-residue protein sequence, read N- to C-terminus: MAAAAVTGQRPETAAAEEASRPQWAPPDHCQAQAAAGLGDGEDAPVRPLCKPRGICSRAYFLVLMVFVHLYLGNVLALLLFVHYSNGDESSDPGPQHRAQGPGPEPTLGPLTRLEGIKVGHERKVQLVTDRDHFIRTLSLKPLLFEIPGFLTDEECRLIIHLAQMKGLQRSQILPTEEYEEAMSTMQVSQLDLFRLLDQNRDGHLQLREVLAQTRLGNGWWMTPESIQEMYAAIKADPDGDGVLSLQEFSNMDLRDFHKYMRSHKAESSELVRNSHHTWLYQGEGAHHIMRAIRQRVLRLTRLSPEIVELSEPLQVVRYGEGGHYHAHVDSGPVYPETICSHTKLVANESVPFETSCRYMTVLFYLNNVTGGGETVFPVADNRTYDEMSLIQDDVDLRDTRRHCDKGNLRVKPQQGTAVFWYNYLPDGQGWVGDVDDYSLHGGCLVTRGTKWIANNWINVDPSRARQALFQQEMARLAREGGTDSQPEWALDRAYRDARVEL.

The segment at 1–29 is disordered; it reads MAAAAVTGQRPETAAAEEASRPQWAPPDH. Residues 1-60 are Cytoplasmic-facing; the sequence is MAAAAVTGQRPETAAAEEASRPQWAPPDHCQAQAAAGLGDGEDAPVRPLCKPRGICSRAY. The chain crosses the membrane as a helical; Signal-anchor for type II membrane protein span at residues 61 to 81; it reads FLVLMVFVHLYLGNVLALLLF. At 82 to 502 the chain is on the lumenal side; the sequence is VHYSNGDESS…RAYRDARVEL (421 aa). The disordered stretch occupies residues 89-111; that stretch reads ESSDPGPQHRAQGPGPEPTLGPL. 2 EF-hand domains span residues 185-220 and 224-259; these read TMQVSQLDLFRLLDQNRDGHLQLREVLAQTRLGNGW and PESIQEMYAAIKADPDGDGVLSLQEFSNMDLRDFHK. Ca(2+)-binding residues include D198, N200, D202, H204, E209, D237, D239, D241, and E248. In terms of domain architecture, Fe2OG dioxygenase spans 310–460; it reads LSEPLQVVRY…KWIANNWINV (151 aa). The Fe cation site is built by H328 and D330. N-linked (GlcNAc...) asparagine glycosylation is found at N348 and N368. E374 provides a ligand contact to Fe cation. The N-linked (GlcNAc...) asparagine glycan is linked to N382. K451 serves as a coordination point for 2-oxoglutarate.

Homodimer. It depends on Fe(2+) as a cofactor. Requires L-ascorbate as cofactor. In terms of processing, glycosylated. In terms of tissue distribution, widely expressed with highest levels in adult pancreas, heart, skeletal muscle, brain, placenta, kidney and adrenal gland. Expressed at lower levels in epiphyseal cartilage and in fibroblasts.

It localises to the endoplasmic reticulum membrane. It catalyses the reaction L-prolyl-[hypoxia-inducible factor alpha subunit] + 2-oxoglutarate + O2 = trans-4-hydroxy-L-prolyl-[hypoxia-inducible factor alpha subunit] + succinate + CO2. Functionally, catalyzes the post-translational formation of 4-hydroxyproline in hypoxia-inducible factor (HIF) alpha proteins. Hydroxylates HIF1A at 'Pro-402' and 'Pro-564'. May function as a cellular oxygen sensor and, under normoxic conditions, may target HIF through the hydroxylation for proteasomal degradation via the von Hippel-Lindau ubiquitination complex. The chain is Transmembrane prolyl 4-hydroxylase (P4HTM) from Homo sapiens (Human).